The chain runs to 813 residues: Xaa-Pro dipeptidyl-peptidase (813 aa).

Residues Ser-375, Asp-495, and His-526 each act as charge relay system in the active site.

It belongs to the peptidase S15 family. As to quaternary structure, homodimer.

The protein localises to the cytoplasm. The catalysed reaction is Hydrolyzes Xaa-Pro-|- bonds to release unblocked, N-terminal dipeptides from substrates including Ala-Pro-|-p-nitroanilide and (sequentially) Tyr-Pro-|-Phe-Pro-|-Gly-Pro-|-Ile.. Removes N-terminal dipeptides sequentially from polypeptides having unsubstituted N-termini provided that the penultimate residue is proline. The protein is Xaa-Pro dipeptidyl-peptidase of Lactiplantibacillus plantarum (strain ATCC BAA-793 / NCIMB 8826 / WCFS1) (Lactobacillus plantarum).